Reading from the N-terminus, the 707-residue chain is Potassium-transporting ATPase ATP-binding subunit (707 aa).

Basic and acidic residues predominate over residues 1-11; sequence MNTDTQKHEDA. Residues 1–37 form a disordered region; the sequence is MNTDTQKHEDAMSTTTPARAPHDDAPSGQQPGQGRVG. The next 4 helical transmembrane spans lie at 61-81, 89-109, 238-258, and 271-291; these read VMAK…TTAF, WFGW…NLAE, IALN…CATL, and MIVL…ALLS. Aspartate 326 acts as the 4-aspartylphosphate intermediate in catalysis. Residues aspartate 363, glutamate 367, 397-404, and lysine 415 contribute to the ATP site; that span reads FTAQTRMS. 2 residues coordinate Mg(2+): aspartate 542 and aspartate 546. The next 3 helical transmembrane spans lie at 612 to 632, 640 to 660, and 683 to 703; these read FAII…LNIM, AILS…PLAL, and LGGL…VSLI.

This sequence belongs to the cation transport ATPase (P-type) (TC 3.A.3) family. Type IA subfamily. In terms of assembly, the system is composed of three essential subunits: KdpA, KdpB and KdpC.

Its subcellular location is the cell membrane. The catalysed reaction is K(+)(out) + ATP + H2O = K(+)(in) + ADP + phosphate + H(+). Functionally, part of the high-affinity ATP-driven potassium transport (or Kdp) system, which catalyzes the hydrolysis of ATP coupled with the electrogenic transport of potassium into the cytoplasm. This subunit is responsible for energy coupling to the transport system and for the release of the potassium ions to the cytoplasm. The sequence is that of Potassium-transporting ATPase ATP-binding subunit from Streptomyces coelicolor (strain ATCC BAA-471 / A3(2) / M145).